The following is a 240-amino-acid chain: Pyridoxine 5'-phosphate synthase (240 aa).

Asn-7 is a binding site for 3-amino-2-oxopropyl phosphate. 9–10 is a binding site for 1-deoxy-D-xylulose 5-phosphate; the sequence is DH. Residue Arg-18 coordinates 3-amino-2-oxopropyl phosphate. The active-site Proton acceptor is His-43. Positions 45 and 50 each coordinate 1-deoxy-D-xylulose 5-phosphate. The active-site Proton acceptor is the Glu-70. Thr-100 serves as a coordination point for 1-deoxy-D-xylulose 5-phosphate. His-191 acts as the Proton donor in catalysis. 3-amino-2-oxopropyl phosphate contacts are provided by residues Gly-192 and 213–214; that span reads GH.

Belongs to the PNP synthase family. As to quaternary structure, homooctamer; tetramer of dimers.

The protein resides in the cytoplasm. The catalysed reaction is 3-amino-2-oxopropyl phosphate + 1-deoxy-D-xylulose 5-phosphate = pyridoxine 5'-phosphate + phosphate + 2 H2O + H(+). It participates in cofactor biosynthesis; pyridoxine 5'-phosphate biosynthesis; pyridoxine 5'-phosphate from D-erythrose 4-phosphate: step 5/5. In terms of biological role, catalyzes the complicated ring closure reaction between the two acyclic compounds 1-deoxy-D-xylulose-5-phosphate (DXP) and 3-amino-2-oxopropyl phosphate (1-amino-acetone-3-phosphate or AAP) to form pyridoxine 5'-phosphate (PNP) and inorganic phosphate. In Microcystis aeruginosa (strain NIES-843 / IAM M-2473), this protein is Pyridoxine 5'-phosphate synthase.